A 407-amino-acid chain; its full sequence is Sensor histidine kinase YdfH (407 aa).

The Cytoplasmic segment spans residues 1 to 25; that stretch reads MLIRNPFKDKYYSHDRRALNMLALR. 2 helical membrane-spanning segments follow: residues 26-46 and 47-67; these read VPGL…QFVS and GGWS…FALL. Residues 68–78 lie on the Cytoplasmic side of the membrane; it reads HWHSYRWVKKR. 2 consecutive transmembrane segments (helical) span residues 79–99 and 100–120; these read VILY…LMTG and FFIL…IGMA. At 121–125 the chain is on the cytoplasmic side; it reads DRRRT. Residues 126–146 traverse the membrane as a helical segment; sequence FLILYLLLLLVINSAYHLHKG. At 147–150 the chain is on the extracellular side; sequence EVLH. A helical membrane pass occupies residues 151 to 171; sequence FIVIAAPIMIVIITYAATFFA. Topologically, residues 172-407 are cytoplasmic; it reads QVDEKIKAQL…VPIQGEMQDE (236 aa). The Histidine kinase domain occupies 201–402; it reads ERQRMARDLH…QIEITVPIQG (202 aa). Histidine 210 carries the phosphohistidine; by autocatalysis modification.

The protein localises to the cell membrane. It carries out the reaction ATP + protein L-histidine = ADP + protein N-phospho-L-histidine.. Member of the two-component regulatory system YdfH/YdfI. May activate YdfI by phosphorylation. This chain is Sensor histidine kinase YdfH (ydfH), found in Bacillus subtilis (strain 168).